A 452-amino-acid polypeptide reads, in one-letter code: UDP-N-acetylmuramoylalanine--D-glutamate ligase (452 aa).

115 to 121 (GTNGKTT) is an ATP binding site.

This sequence belongs to the MurCDEF family.

The protein localises to the cytoplasm. The catalysed reaction is UDP-N-acetyl-alpha-D-muramoyl-L-alanine + D-glutamate + ATP = UDP-N-acetyl-alpha-D-muramoyl-L-alanyl-D-glutamate + ADP + phosphate + H(+). It functions in the pathway cell wall biogenesis; peptidoglycan biosynthesis. In terms of biological role, cell wall formation. Catalyzes the addition of glutamate to the nucleotide precursor UDP-N-acetylmuramoyl-L-alanine (UMA). The chain is UDP-N-acetylmuramoylalanine--D-glutamate ligase from Geobacter metallireducens (strain ATCC 53774 / DSM 7210 / GS-15).